The sequence spans 253 residues: Probable transcriptional regulatory protein RC0681 (253 aa).

Positions Met1–Arg21 are disordered.

This sequence belongs to the TACO1 family.

It localises to the cytoplasm. The sequence is that of Probable transcriptional regulatory protein RC0681 from Rickettsia conorii (strain ATCC VR-613 / Malish 7).